A 352-amino-acid chain; its full sequence is 7,8-didemethyl-8-hydroxy-5-deazariboflavin synthase (352 aa).

Positions 35-275 constitute a Radical SAM core domain; it reads ITFSKNAFIP…EGISIQVPPN (241 aa). [4Fe-4S] cluster contacts are provided by cysteine 49, cysteine 53, and cysteine 56.

Belongs to the radical SAM superfamily. CofG family. In terms of assembly, consists of two subunits, CofG and CofH. Requires [4Fe-4S] cluster as cofactor.

It catalyses the reaction 5-amino-5-(4-hydroxybenzyl)-6-(D-ribitylimino)-5,6-dihydrouracil + S-adenosyl-L-methionine = 7,8-didemethyl-8-hydroxy-5-deazariboflavin + 5'-deoxyadenosine + L-methionine + NH4(+) + H(+). Its pathway is cofactor biosynthesis; coenzyme F0 biosynthesis. Catalyzes the radical-mediated synthesis of 7,8-didemethyl-8-hydroxy-5-deazariboflavin from 5-amino-5-(4-hydroxybenzyl)-6-(D-ribitylimino)-5,6-dihydrouracil. This chain is 7,8-didemethyl-8-hydroxy-5-deazariboflavin synthase, found in Methanococcus maripaludis (strain C5 / ATCC BAA-1333).